The sequence spans 282 residues: ADP-ribosyl cyclase/cyclic ADP-ribose hydrolase (282 aa).

The N-terminal stretch at 1–24 (MSPVAIIACVCLAVTLTSISPSEA) is a signal peptide. Disulfide bonds link cysteine 39/cysteine 58, cysteine 75/cysteine 155, cysteine 136/cysteine 149, cysteine 230/cysteine 251, and cysteine 263/cysteine 272.

The protein belongs to the ADP-ribosyl cyclase family. Has different isoforms which may be the result of different amounts of phosphorylation. In terms of tissue distribution, immature occoyctes. Oocytes.

The protein localises to the cytoplasmic vesicle. It carries out the reaction NAD(+) = cyclic ADP-beta-D-ribose + nicotinamide + H(+). It catalyses the reaction nicotinate + NADP(+) = nicotinate-adenine dinucleotide phosphate + nicotinamide. The catalysed reaction is 2'-phospho-cyclic ADP-ribose + nicotinate = nicotinate-adenine dinucleotide phosphate. Activity is presumably regulated by its sequestration in vesicles before egg fertilization. After fertilization and upon NADase release, it could then be regulated via its potential phosphorylation sites. Its function is as follows. Synthesizes cyclic ADP-ribose (cADPR), a second messenger for calcium mobilization from endoplasmic reticulum; ADP-ribose is a minor product. Synthesizes the Ca(2+) mobilizer nicotinate-adenine dinucleotide phosphate from 2'-phospho-cADPR and nicotinic acid as well as from NADP(+) and nicotinic acid; with NADP(+) as substrate preferentially catalyzes NADP(+) hydrolysis rather than NAADP(+) synthesis, about 70-fold better at pH 7.4. Has cADPR hydrolase activity at very high enzyme concentrations, which is probably not physiological. The conversion of NAD(+) into ADP-ribose is also only observed at high enzyme concentrations and results from the hydrolysis of cADP-ribose. The polypeptide is ADP-ribosyl cyclase/cyclic ADP-ribose hydrolase (Aplysia californica (California sea hare)).